The following is a 105-amino-acid chain: Large ribosomal subunit protein uL24 (105 aa).

It belongs to the universal ribosomal protein uL24 family. In terms of assembly, part of the 50S ribosomal subunit.

One of two assembly initiator proteins, it binds directly to the 5'-end of the 23S rRNA, where it nucleates assembly of the 50S subunit. Functionally, one of the proteins that surrounds the polypeptide exit tunnel on the outside of the subunit. The sequence is that of Large ribosomal subunit protein uL24 from Clostridium kluyveri (strain ATCC 8527 / DSM 555 / NBRC 12016 / NCIMB 10680 / K1).